The following is a 339-amino-acid chain: Holliday junction branch migration complex subunit RuvB (339 aa).

A large ATPase domain (RuvB-L) region spans residues methionine 1–tyrosine 187. Residues leucine 26, arginine 27, glycine 68, lysine 71, threonine 72, threonine 73, glutamate 134 to phenylalanine 136, arginine 177, tyrosine 187, and arginine 224 contribute to the ATP site. Position 72 (threonine 72) interacts with Mg(2+). A small ATPAse domain (RuvB-S) region spans residues threonine 188 to glycine 258. The tract at residues serine 261–lysine 339 is head domain (RuvB-H). Residues arginine 297, arginine 316, and arginine 321 each contribute to the DNA site.

The protein belongs to the RuvB family. In terms of assembly, homohexamer. Forms an RuvA(8)-RuvB(12)-Holliday junction (HJ) complex. HJ DNA is sandwiched between 2 RuvA tetramers; dsDNA enters through RuvA and exits via RuvB. An RuvB hexamer assembles on each DNA strand where it exits the tetramer. Each RuvB hexamer is contacted by two RuvA subunits (via domain III) on 2 adjacent RuvB subunits; this complex drives branch migration. In the full resolvosome a probable DNA-RuvA(4)-RuvB(12)-RuvC(2) complex forms which resolves the HJ.

Its subcellular location is the cytoplasm. It carries out the reaction ATP + H2O = ADP + phosphate + H(+). Functionally, the RuvA-RuvB-RuvC complex processes Holliday junction (HJ) DNA during genetic recombination and DNA repair, while the RuvA-RuvB complex plays an important role in the rescue of blocked DNA replication forks via replication fork reversal (RFR). RuvA specifically binds to HJ cruciform DNA, conferring on it an open structure. The RuvB hexamer acts as an ATP-dependent pump, pulling dsDNA into and through the RuvAB complex. RuvB forms 2 homohexamers on either side of HJ DNA bound by 1 or 2 RuvA tetramers; 4 subunits per hexamer contact DNA at a time. Coordinated motions by a converter formed by DNA-disengaged RuvB subunits stimulates ATP hydrolysis and nucleotide exchange. Immobilization of the converter enables RuvB to convert the ATP-contained energy into a lever motion, pulling 2 nucleotides of DNA out of the RuvA tetramer per ATP hydrolyzed, thus driving DNA branch migration. The RuvB motors rotate together with the DNA substrate, which together with the progressing nucleotide cycle form the mechanistic basis for DNA recombination by continuous HJ branch migration. Branch migration allows RuvC to scan DNA until it finds its consensus sequence, where it cleaves and resolves cruciform DNA. This chain is Holliday junction branch migration complex subunit RuvB, found in Clostridioides difficile (strain 630) (Peptoclostridium difficile).